The chain runs to 452 residues: Trigger factor (452 aa).

In terms of domain architecture, PPIase FKBP-type spans 170-255 (GDRVTIDFTG…VKSVAAPGPL (86 aa)).

This sequence belongs to the FKBP-type PPIase family. Tig subfamily.

The protein resides in the cytoplasm. It carries out the reaction [protein]-peptidylproline (omega=180) = [protein]-peptidylproline (omega=0). Involved in protein export. Acts as a chaperone by maintaining the newly synthesized protein in an open conformation. Functions as a peptidyl-prolyl cis-trans isomerase. In Xanthobacter autotrophicus (strain ATCC BAA-1158 / Py2), this protein is Trigger factor.